The following is a 282-amino-acid chain: Transcription factor HES-1 (282 aa).

The interval 1–44 (MPADIMEKNSSSPVAATPASVNTTPDKPKTASEHRKSSKPIMEK) is disordered. The segment covering 10-21 (SSSPVAATPASV) has biased composition (low complexity). The span at 26 to 35 (DKPKTASEHR) shows a compositional bias: basic and acidic residues. The 58-residue stretch at 34-91 (HRKSSKPIMEKRRRARINESLSQLKTLILDALKKDSSRHSKLEKADILEMTVKHLRNL) folds into the bHLH domain. An Orange domain is found at 110-143 (YRAGFSECMNEVTRFLSTCEGVNTEVRTRLLGHL). Disordered regions lie at residues 158–204 (QAHP…GSAP) and 256–282 (TSVG…PWRN). 2 stretches are compositionally biased toward pro residues: residues 164 to 174 (QAPPPPPPSGP) and 182 to 202 (FAPP…PPGS). Residues 264–275 (SPSSGSSLTSDS) are compositionally biased toward low complexity. The short motif at 277-280 (WRPW) is the WRPW motif element.

As to quaternary structure, interacts with SIRT1. Transcription repression requires formation of a complex with a corepressor protein of the Groucho/TLE family. Interacts (via WPRW motif) with TLE1, and more weakly with TLE2. Interacts with HES6. Interacts with an FA complex, composed of FANCA, FANCF, FANCG and FANCL, but not of FANCC, nor FANCE. In terms of tissue distribution, expressed at high levels in undifferentiated neural precursor cells, but the level of expression decreases as neural differentiation proceeds.

It localises to the nucleus. Functionally, transcriptional repressor of genes that require a bHLH protein for their transcription. May act as a negative regulator of myogenesis by inhibiting the functions of MYOD1 and ASH1. Binds DNA on N-box motifs: 5'-CACNAG-3' with high affinity and on E-box motifs: 5'-CANNTG-3' with low affinity. May play a role in a functional FA core complex response to DNA cross-link damage, being required for the stability and nuclear localization of FA core complex proteins, as well as for FANCD2 monoubiquitination in response to DNA damage. The sequence is that of Transcription factor HES-1 (Hes1) from Mus musculus (Mouse).